The following is a 655-amino-acid chain: p-hydroxybenzoic acid efflux pump subunit AaeB (655 aa).

Topologically, residues Met-1–Arg-12 are periplasmic. A helical membrane pass occupies residues Phe-13–Leu-33. Residues Glu-34–Arg-37 are Cytoplasmic-facing. The helical transmembrane segment at Trp-38 to Pro-58 threads the bilayer. Residues Tyr-59–Phe-68 are Periplasmic-facing. A helical membrane pass occupies residues Leu-69 to Ile-89. Residues Arg-90–Pro-92 lie on the Cytoplasmic side of the membrane. A helical transmembrane segment spans residues Leu-93–Val-113. The Periplasmic segment spans residues Arg-114–Ala-120. Residues Trp-121–Leu-141 form a helical membrane-spanning segment. The Cytoplasmic portion of the chain corresponds to Thr-142–Ser-151. A helical membrane pass occupies residues Glu-152 to Ile-172. Topologically, residues Lys-173–Thr-369 are periplasmic. Residues Leu-370 to Val-390 traverse the membrane as a helical segment. Over Thr-391 to Asp-406 the chain is Cytoplasmic. Residues Phe-407 to Pro-427 traverse the membrane as a helical segment. Residues Asn-428–Gln-430 lie on the Periplasmic side of the membrane. Residues Gln-431–Val-451 form a helical membrane-spanning segment. Residues Gln-452–Ser-458 are Cytoplasmic-facing. The chain crosses the membrane as a helical span at residues Met-459–Phe-479. Residues Ser-480–Gln-481 are Periplasmic-facing. The helical transmembrane segment at Phe-482–Leu-502 threads the bilayer. The Cytoplasmic segment spans residues Val-503 to Ser-655.

It belongs to the aromatic acid exporter ArAE (TC 2.A.85) family.

Its subcellular location is the cell inner membrane. Forms an efflux pump with AaeA. Could function as a metabolic relief valve, allowing to eliminate certain compounds when they accumulate to high levels in the cell. Substrates are p-hydroxybenzoic acid (pHBA), 6-hydroxy-2-naphthoic and 2-hydroxycinnamate. The polypeptide is p-hydroxybenzoic acid efflux pump subunit AaeB (Escherichia coli (strain K12)).